We begin with the raw amino-acid sequence, 492 residues long: Aspartyl/glutamyl-tRNA(Asn/Gln) amidotransferase subunit B (492 aa).

It belongs to the GatB/GatE family. GatB subfamily. In terms of assembly, heterotrimer of A, B and C subunits.

The enzyme catalyses L-glutamyl-tRNA(Gln) + L-glutamine + ATP + H2O = L-glutaminyl-tRNA(Gln) + L-glutamate + ADP + phosphate + H(+). The catalysed reaction is L-aspartyl-tRNA(Asn) + L-glutamine + ATP + H2O = L-asparaginyl-tRNA(Asn) + L-glutamate + ADP + phosphate + 2 H(+). Allows the formation of correctly charged Asn-tRNA(Asn) or Gln-tRNA(Gln) through the transamidation of misacylated Asp-tRNA(Asn) or Glu-tRNA(Gln) in organisms which lack either or both of asparaginyl-tRNA or glutaminyl-tRNA synthetases. The reaction takes place in the presence of glutamine and ATP through an activated phospho-Asp-tRNA(Asn) or phospho-Glu-tRNA(Gln). In Bradyrhizobium sp. (strain BTAi1 / ATCC BAA-1182), this protein is Aspartyl/glutamyl-tRNA(Asn/Gln) amidotransferase subunit B.